The primary structure comprises 198 residues: LexA repressor (198 aa).

Positions 28–47 (IRDIAKHFKLTPRGAHIHVL) form a DNA-binding region, H-T-H motif. Catalysis depends on for autocatalytic cleavage activity residues serine 120 and lysine 157.

Belongs to the peptidase S24 family. In terms of assembly, homodimer.

The enzyme catalyses Hydrolysis of Ala-|-Gly bond in repressor LexA.. Represses a number of genes involved in the response to DNA damage (SOS response), including recA and lexA. In the presence of single-stranded DNA, RecA interacts with LexA causing an autocatalytic cleavage which disrupts the DNA-binding part of LexA, leading to derepression of the SOS regulon and eventually DNA repair. The polypeptide is LexA repressor (Thermosipho africanus (strain TCF52B)).